The sequence spans 690 residues: Protein arginine N-methyltransferase 7 (690 aa).

SAM-dependent MTase PRMT-type domains lie at 14-357 (QNSW…YSLW) and 366-690 (TKSV…QKKL).

It belongs to the class I-like SAM-binding methyltransferase superfamily. Protein arginine N-methyltransferase family. PRMT7 subfamily.

Its function is as follows. Essential arginine methyltransferase that can both catalyze the formation of omega-N monomethylarginine (MMA) and symmetrical dimethylarginine (sDMA). Specifically mediates the symmetrical dimethylation of arginine residues in the small nuclear ribonucleoproteins SmD1 and SmD3. In Drosophila erecta (Fruit fly), this protein is Protein arginine N-methyltransferase 7 (Art7).